The chain runs to 351 residues: Uroporphyrinogen decarboxylase (351 aa).

Substrate-binding positions include 26 to 30 (RQAGR), Asp-75, Tyr-151, Ser-206, and His-321.

This sequence belongs to the uroporphyrinogen decarboxylase family. As to quaternary structure, homodimer.

The protein localises to the cytoplasm. The enzyme catalyses uroporphyrinogen III + 4 H(+) = coproporphyrinogen III + 4 CO2. It functions in the pathway porphyrin-containing compound metabolism; protoporphyrin-IX biosynthesis; coproporphyrinogen-III from 5-aminolevulinate: step 4/4. Functionally, catalyzes the decarboxylation of four acetate groups of uroporphyrinogen-III to yield coproporphyrinogen-III. This chain is Uroporphyrinogen decarboxylase, found in Koribacter versatilis (strain Ellin345).